The primary structure comprises 274 residues: Triosephosphate isomerase (274 aa).

A substrate-binding site is contributed by 31–33; it reads NWK. His-118 (electrophile) is an active-site residue. Catalysis depends on Glu-188, which acts as the Proton acceptor. Residues Gly-194, Ser-234, and 255–256 each bind substrate; that span reads GG.

Belongs to the triosephosphate isomerase family. In terms of assembly, homodimer.

It localises to the cytoplasm. The enzyme catalyses D-glyceraldehyde 3-phosphate = dihydroxyacetone phosphate. It functions in the pathway carbohydrate biosynthesis; gluconeogenesis. The protein operates within carbohydrate degradation; glycolysis; D-glyceraldehyde 3-phosphate from glycerone phosphate: step 1/1. Its function is as follows. Involved in the gluconeogenesis. Catalyzes stereospecifically the conversion of dihydroxyacetone phosphate (DHAP) to D-glyceraldehyde-3-phosphate (G3P). The chain is Triosephosphate isomerase from Chlamydia trachomatis serovar D (strain ATCC VR-885 / DSM 19411 / UW-3/Cx).